We begin with the raw amino-acid sequence, 379 residues long: Chaperone protein DnaJ (379 aa).

A J domain is found at 5-70 (DYYELLEVSR…QKRAAYDQFG (66 aa)). The segment at 135 to 213 (GKEVEITVPR…CHGQGRVRES (79 aa)) adopts a CR-type zinc-finger fold. Residues Cys148, Cys151, Cys165, Cys168, Cys187, Cys190, Cys201, and Cys204 each coordinate Zn(2+). CXXCXGXG motif repeat units follow at residues 148-155 (CTVCEGSG), 165-172 (CETCQGMG), 187-194 (CPTCHGEG), and 201-208 (CASCHGQG).

Belongs to the DnaJ family. Homodimer. It depends on Zn(2+) as a cofactor.

The protein resides in the cytoplasm. Participates actively in the response to hyperosmotic and heat shock by preventing the aggregation of stress-denatured proteins and by disaggregating proteins, also in an autonomous, DnaK-independent fashion. Unfolded proteins bind initially to DnaJ; upon interaction with the DnaJ-bound protein, DnaK hydrolyzes its bound ATP, resulting in the formation of a stable complex. GrpE releases ADP from DnaK; ATP binding to DnaK triggers the release of the substrate protein, thus completing the reaction cycle. Several rounds of ATP-dependent interactions between DnaJ, DnaK and GrpE are required for fully efficient folding. Also involved, together with DnaK and GrpE, in the DNA replication of plasmids through activation of initiation proteins. The protein is Chaperone protein DnaJ of Legionella pneumophila (strain Corby).